We begin with the raw amino-acid sequence, 686 residues long: Mannan-binding lectin serine protease 2 (686 aa).

A signal peptide spans 1-15 (MRLLTLLGLLCGSVA). The CUB 1 domain maps to 16 to 137 (TPLGPKWPEP…TGFEAFYAAE (122 aa)). Ca(2+) contacts are provided by Glu67, Asp75, Asp120, Ser122, Asn123, Asp138, Ile139, and Glu141. An intrachain disulfide couples Cys72 to Cys90. Residues 138 to 181 (DIDECQVAPGEAPTCDHHCHNHLGGFYCSCRAGYVLHRNKRTCS) form the EGF-like; calcium-binding domain. 12 cysteine pairs are disulfide-bonded: Cys142–Cys156, Cys152–Cys165, Cys167–Cys180, Cys184–Cys211, Cys241–Cys259, Cys300–Cys348, Cys328–Cys361, Cys366–Cys412, Cys396–Cys430, Cys434–Cys552, Cys598–Cys618, and Cys629–Cys660. Residues Asn158, His159, and Gly162 each contribute to the Ca(2+) site. Residue Asn158 is modified to (3R)-3-hydroxyasparagine. The CUB 2 domain maps to 184–296 (CSGQVFTQRS…TGWKIHYTST (113 aa)). Sushi domains are found at residues 298-363 (QPCP…ACSI) and 364-432 (VDCG…VCEP). The 240-residue stretch at 445–684 (IYGGQKAKPG…YIPWIENIIS (240 aa)) folds into the Peptidase S1 domain. Catalysis depends on charge relay system residues His483 and Asp532. The Charge relay system role is filled by Ser633.

It belongs to the peptidase S1 family. In terms of assembly, homodimer; disulfide-linked. Binds MBL2. Isoform 2 binds to MASP1. Binds SERPING1. Dimerization and MBL2 binding requires calcium ions. The iron and 2-oxoglutarate dependent 3-hydroxylation of aspartate and asparagine is (R) stereospecific within EGF domains. In terms of processing, activated by cleavage after Arg-444. The uncleaved zymogen is inactive towards synthetic substrates, but has sufficient activity to effect autocatalytic cleavage. In terms of tissue distribution, plasma.

The protein resides in the secreted. It catalyses the reaction Selective cleavage after Arg-223 in complement component C2 (-Ser-Leu-Gly-Arg-|-Lys-Ile-Gln-Ile) and after Arg-76 in complement component C4 (-Gly-Leu-Gln-Arg-|-Ala-Leu-Glu-Ile).. Its function is as follows. Serum protease that plays an important role in the activation of the complement system via mannose-binding lectin. After activation by auto-catalytic cleavage it cleaves C2 and C4, leading to their activation and to the formation of C3 convertase. This chain is Mannan-binding lectin serine protease 2 (MASP2), found in Homo sapiens (Human).